Here is a 234-residue protein sequence, read N- to C-terminus: 2-C-methyl-D-erythritol 4-phosphate cytidylyltransferase (234 aa).

It belongs to the IspD/TarI cytidylyltransferase family. IspD subfamily.

It carries out the reaction 2-C-methyl-D-erythritol 4-phosphate + CTP + H(+) = 4-CDP-2-C-methyl-D-erythritol + diphosphate. It functions in the pathway isoprenoid biosynthesis; isopentenyl diphosphate biosynthesis via DXP pathway; isopentenyl diphosphate from 1-deoxy-D-xylulose 5-phosphate: step 2/6. Functionally, catalyzes the formation of 4-diphosphocytidyl-2-C-methyl-D-erythritol from CTP and 2-C-methyl-D-erythritol 4-phosphate (MEP). In Thermosynechococcus vestitus (strain NIES-2133 / IAM M-273 / BP-1), this protein is 2-C-methyl-D-erythritol 4-phosphate cytidylyltransferase.